Consider the following 240-residue polypeptide: Aquaporin Z (240 aa).

Transmembrane regions (helical) follow at residues 10–30 (MIGTFWLTFAGCGSAVIAAGF) and 35–55 (IGLVGVSLAFGLSVVTMAYAI). Positions 64–66 (NPA) match the NPA 1 motif. 3 consecutive transmembrane segments (helical) span residues 90 to 110 (VLGAIAAAALLYLIASGAAGF), 131 to 151 (LVACFVMEVVMTMMFLFVIMG), and 160 to 180 (GFAPLAIGLALVMIHLVSIPV). The NPA 2 motif lies at 186-188 (NPA). Residues 202 to 222 (IGQLWLFWVAPLLGGVLGGVI) form a helical membrane-spanning segment.

It belongs to the MIP/aquaporin (TC 1.A.8) family. In terms of assembly, homotetramer.

The protein localises to the cell inner membrane. The catalysed reaction is H2O(in) = H2O(out). Channel that permits osmotically driven movement of water in both directions. It is involved in the osmoregulation and in the maintenance of cell turgor during volume expansion in rapidly growing cells. It mediates rapid entry or exit of water in response to abrupt changes in osmolarity. The polypeptide is Aquaporin Z (Rhodopseudomonas palustris (strain ATCC BAA-98 / CGA009)).